The sequence spans 96 residues: uncharacterized protein (96 aa).

A signal peptide spans 1-19; sequence MKFLSALLLIVLLISVVFG. N-linked (GlcNAc...) asparagine glycosylation is present at Asn20. Residues 27–46 show a composition bias toward low complexity; that stretch reads AWATTTTGGTTGSQTSPATH. The interval 27–58 is disordered; it reads AWATTTTGGTTGSQTSPATHGGHGGNGGNGHS. Over residues 47–56 the composition is skewed to gly residues; the sequence is GGHGGNGGNG.

It is found in the secreted. This is an uncharacterized protein from Dictyostelium discoideum (Social amoeba).